The following is a 356-amino-acid chain: Probable L-asparaginase 4 (356 aa).

The N-terminal stretch at 1–22 (MWGFIVTCGIFLVLLCQLRLLS) is a signal peptide. Residues 36–356 (PNVTVFAMGG…RDIEGLFSIK (321 aa)) enclose the Asparaginase/glutaminase domain. Asn-37 is a glycosylation site (N-linked (GlcNAc...) asparagine). Thr-46 (O-isoaspartyl threonine intermediate) is an active-site residue. Asn-52 carries an N-linked (GlcNAc...) asparagine glycan. Substrate contacts are provided by residues Ser-93 and 126–127 (TD). The N-linked (GlcNAc...) asparagine glycan is linked to Asn-176.

This sequence belongs to the asparaginase 1 family.

It is found in the secreted. Its subcellular location is the cell wall. The enzyme catalyses L-asparagine + H2O = L-aspartate + NH4(+). The protein is Probable L-asparaginase 4 of Schizosaccharomyces pombe (strain 972 / ATCC 24843) (Fission yeast).